Here is a 538-residue protein sequence, read N- to C-terminus: Cytochrome P450 18a1 (538 aa).

Residues 24-44 traverse the membrane as a helical segment; that stretch reads QHLLMVFLGLLALVTLLQWLV. Cys466 is a heme binding site.

Belongs to the cytochrome P450 family. Requires heme as cofactor. As to expression, expressed in body wall (epidermal and muscle cells) and mid- and hind-gut.

It is found in the endoplasmic reticulum membrane. The protein resides in the microsome membrane. Functionally, probably involved in steroid hormones biosynthesis. The protein is Cytochrome P450 18a1 (Cyp18a1) of Drosophila melanogaster (Fruit fly).